Consider the following 218-residue polypeptide: Transmembrane gamma-carboxyglutamic acid protein 1 (218 aa).

Positions 1–20 (MGRIFLTGEKANSVLKRYPR) are excised as a propeptide. Residues 20-66 (RANGLFEEIRQGNIERECKEEVCTFEEAREAFENNEKTKEFWNTYTK) enclose the Gla domain. Topologically, residues 21–80 (ANGLFEEIRQGNIERECKEEVCTFEEAREAFENNEKTKEFWNTYTKAQQGESNRGSDWFQ) are extracellular. C37 and C42 are oxidised to a cystine. A helical transmembrane segment spans residues 81–101 (FYLTFPLIFGLFIILLVIFLI). Residues 102-218 (WRCFLRNKTR…AMVPVATTIK (117 aa)) lie on the Cytoplasmic side of the membrane. Residues 160–192 (STRLSNCDPPPTYEEATGQMNLRRSETEPHLDP) are disordered. Residues 182–192 (RRSETEPHLDP) show a composition bias toward basic and acidic residues.

Post-translationally, gla residues are produced after subsequent post-translational modifications of glutamate by a vitamin K-dependent gamma-carboxylase.

The protein localises to the membrane. The chain is Transmembrane gamma-carboxyglutamic acid protein 1 (PRRG1) from Bos taurus (Bovine).